The following is a 141-amino-acid chain: Nucleoside diphosphate kinase (141 aa).

Residues Lys11, Phe59, Arg87, Thr93, Arg104, and Asn114 each contribute to the ATP site. His117 serves as the catalytic Pros-phosphohistidine intermediate.

This sequence belongs to the NDK family. Homotetramer. Mg(2+) serves as cofactor.

The protein resides in the cytoplasm. The catalysed reaction is a 2'-deoxyribonucleoside 5'-diphosphate + ATP = a 2'-deoxyribonucleoside 5'-triphosphate + ADP. It catalyses the reaction a ribonucleoside 5'-diphosphate + ATP = a ribonucleoside 5'-triphosphate + ADP. Its function is as follows. Major role in the synthesis of nucleoside triphosphates other than ATP. The ATP gamma phosphate is transferred to the NDP beta phosphate via a ping-pong mechanism, using a phosphorylated active-site intermediate. The protein is Nucleoside diphosphate kinase of Acidovorax sp. (strain JS42).